The chain runs to 399 residues: MGSTDTEDQVRTIDVGTPPERYARGWHCLGLVRDFADGKPHQVDAFGTSLVVFAGEDGKLNVLDAYCRHMGGNLAQGSVKGNTIACPFHDWRWRGDGKCAEIPYARRVPPLARTRTWPVAEVSGQLFVWHDPQGSKPPAELAVPEVPTYGDPGWTDWVWNSIEVTGSHCREIVDNVVDMAHFFYVHYGMPTYFRNVFEGHTATQVMRSLPRADAVGVSQATNYSAESRSDATYYGPSYMIDKLWSAGRDPESTPNIYLINCHYPISPTSFRLQYGVMVERPEGVPPEQAEQIAQAVAQGVAIGFEQDVEIWKNKSRIDNPLLCEEDGPVYQLRRWYEQFYVDVEDIRPEMVNRFEYEIDTTRALTSWQAEVDENVAAGRSAFAPNLTRAREAASAESGS.

A Rieske domain is found at 26–128 (WHCLGLVRDF…VAEVSGQLFV (103 aa)). [2Fe-2S] cluster contacts are provided by C67, H69, C86, and H89. Positions 175, 181, 186, and 307 each coordinate Fe cation.

Homotrimer. The two-component system 3-ketosteroid-9-alpha-monooxygenase is composed of an oxygenase component KshA and a reductase component KshB. It depends on [2Fe-2S] cluster as a cofactor. Fe cation serves as cofactor.

Its function is as follows. Could catalyze the introduction of a 9alpha-hydroxyl moiety into the ring B of 3-ketosteroid substrates. This Rhodococcus rhodochrous protein is Probable 3-ketosteroid-9-alpha-monooxygenase, oxygenase component.